Here is a 466-residue protein sequence, read N- to C-terminus: Argininosuccinate lyase (466 aa).

Belongs to the lyase 1 family. Argininosuccinate lyase subfamily.

It is found in the cytoplasm. It carries out the reaction 2-(N(omega)-L-arginino)succinate = fumarate + L-arginine. It participates in amino-acid biosynthesis; L-arginine biosynthesis; L-arginine from L-ornithine and carbamoyl phosphate: step 3/3. In Roseobacter denitrificans (strain ATCC 33942 / OCh 114) (Erythrobacter sp. (strain OCh 114)), this protein is Argininosuccinate lyase.